The chain runs to 174 residues: Co-chaperone protein HscB homolog (174 aa).

The J domain maps to Asn2–Leu74.

It belongs to the HscB family. Interacts with HscA and stimulates its ATPase activity.

Functionally, co-chaperone involved in the maturation of iron-sulfur cluster-containing proteins. Seems to help targeting proteins to be folded toward HscA. The polypeptide is Co-chaperone protein HscB homolog (Shewanella pealeana (strain ATCC 700345 / ANG-SQ1)).